The sequence spans 364 residues: MSIINKAAAIGGGVIGAGWVARLLLNGIDVSIFDPDPEASRKVSEVMKGARRAYKQMVPGGLPKEGKLTFAKTIAEAVADADFIQESVPERLDLKHRVLAEIDAHAPANAIVGSSTSGIKPTDMQVAMKKHPERLVVGHPFNPVYLLPLVEIVGGDQTFPEAIEVAKEIYASIGMKPVVIRKEIEAFVGDRLLEAAWREALWLIKDGICTVEELDDIMRYGFGLRWAQMGMFQVYRVAGGEAGMRHFMAQFGPCLKWPWTKLMDVPEFNDELVDLIATQSDDQAHGLSIRELEKIRDDNLVAIMDALSKQNKGKGWGAGALHKDYTKQLAKLAAKKPAASTAAEKAKASKPVKKAEKPKKKKKG.

An NAD(+)-binding site is contributed by 11-16 (GGGVIG). Residues 336 to 364 (KPAASTAAEKAKASKPVKKAEKPKKKKKG) are disordered. Residues 348–364 (ASKPVKKAEKPKKKKKG) are compositionally biased toward basic residues.

It belongs to the 3-hydroxyacyl-CoA dehydrogenase family. L-carnitine dehydrogenase subfamily. Homodimer.

The protein localises to the cytoplasm. The enzyme catalyses carnitine + NAD(+) = 3-dehydrocarnitine + NADH + H(+). Its pathway is amine and polyamine metabolism; carnitine metabolism. Its function is as follows. Catalyzes the NAD(+)-dependent oxidation of L-carnitine to 3-dehydrocarnitine. The polypeptide is L-carnitine dehydrogenase (Mesorhizobium japonicum (strain LMG 29417 / CECT 9101 / MAFF 303099) (Mesorhizobium loti (strain MAFF 303099))).